A 1336-amino-acid polypeptide reads, in one-letter code: Vascular endothelial growth factor receptor 1 (1336 aa).

An N-terminal signal peptide occupies residues 1-22 (MVSCWDTAVLPCALLGCLLLTG). Topologically, residues 23 to 758 (YCSGSKLKGP…QGTSDKSNLE (736 aa)) are extracellular. 7 consecutive Ig-like C2-type domains span residues 32–121 (PELS…KKME), 151–214 (GREL…VNGH), 230–327 (LDVQ…TSVH), 335–421 (SVKH…LTAT), 429–549 (QIYE…RDIR), 556–655 (PNGF…EVLV), and 661–747 (PLLL…AYLT). 2 disulfides stabilise this stretch: Cys53-Cys107 and Cys158-Cys207. N-linked (GlcNAc...) asparagine glycans are attached at residues Asn100, Asn164, Asn196, and Asn251. A disulfide bridge connects residues Cys252 and Cys311. 8 N-linked (GlcNAc...) asparagine glycosylation sites follow: Asn323, Asn417, Asn474, Asn516, Asn597, Asn625, Asn666, and Asn713. Disulfide bonds link Cys454–Cys535 and Cys577–Cys636. Cysteines 682 and 731 form a disulfide. A helical transmembrane segment spans residues 759–780 (LITLTCTCVAATLFWLLLTLFI). The Cytoplasmic portion of the chain corresponds to 781-1336 (RKLKRSSSEV…SVVLYSSPPA (556 aa)). A Protein kinase domain is found at 827 to 1158 (LKLGKSLGRG…ELVEKLGDLL (332 aa)). Residues 833–841 (LGRGAFGKV) and Lys861 contribute to the ATP site. The residue at position 914 (Tyr914) is a Phosphotyrosine; by autocatalysis. Basic and acidic residues predominate over residues 941–957 (KKEKLEPDLEQDQKPRL). Residues 941 to 982 (KKEKLEPDLEQDQKPRLDSVSSSESFTSSGFQEDKSVSDVEG) form a disordered region. A compositionally biased stretch (low complexity) spans 959 to 969 (SVSSSESFTSS). Asp1022 acts as the Proton acceptor in catalysis. 6 positions are modified to phosphotyrosine; by autocatalysis: Tyr1053, Tyr1169, Tyr1213, Tyr1242, Tyr1325, and Tyr1331. A disordered region spans residues 1304 to 1326 (RQEDEDDPELGKESCCSPPPDYN).

The protein belongs to the protein kinase superfamily. Tyr protein kinase family. CSF-1/PDGF receptor subfamily. In terms of assembly, interacts with VEGFA, VEGFB and PGF. Monomer in the absence of bound VEGFA, VEGFB or PGF. Homodimer in the presence of bound VEGFA, VEGFB and PGF. Can also form a heterodimer with KDR. Interacts (tyrosine phosphorylated) with CBL, CRK, GRB2, NCK1, PIK3R1, PLCG, PSEN1 and PTPN11. Probably interacts with PTPRB. Interacts with RACK1. Identified in a complex with CBL and CD2AP. In terms of processing, N-glycosylated. Ubiquitinated after VEGFA-mediated autophosphorylation, leading to proteolytic degradation. Post-translationally, autophosphorylated on tyrosine residues upon ligand binding. Autophosphorylation occurs in trans, i.e. one subunit of the dimeric receptor phosphorylates tyrosine residues on the other subunit. Phosphorylation at Tyr-1169 is important for interaction with PLCG. Phosphorylation at Tyr-1213 is important for interaction with PIK3R1, PTPN11, GRB2, and PLCG. Phosphorylation at Tyr-1331 is important for endocytosis and for interaction with CBL, NCK1 and CRK. Is probably dephosphorylated by PTPRB.

The protein resides in the cell membrane. It is found in the endosome. The enzyme catalyses L-tyrosyl-[protein] + ATP = O-phospho-L-tyrosyl-[protein] + ADP + H(+). Its activity is regulated as follows. Present in an inactive conformation in the absence of bound ligand. Binding of VEGFA, VEGFB or PGF leads to dimerization and activation by autophosphorylation on tyrosine residues. Tyrosine-protein kinase that acts as a cell-surface receptor for VEGFA, VEGFB and PGF, and plays an essential role in the development of embryonic vasculature, the regulation of angiogenesis, cell survival, cell migration, macrophage function, chemotaxis, and cancer cell invasion. Acts as a positive regulator of postnatal retinal hyaloid vessel regression. May play an essential role as a negative regulator of embryonic angiogenesis by inhibiting excessive proliferation of endothelial cells. Can promote endothelial cell proliferation, survival and angiogenesis in adulthood. Its function in promoting cell proliferation seems to be cell-type specific. Promotes PGF-mediated proliferation of endothelial cells, and proliferation of some types of cancer cells, but does not promote proliferation of normal fibroblasts. Has very high affinity for VEGFA and relatively low protein kinase activity; may function as a negative regulator of VEGFA signaling by limiting the amount of free VEGFA and preventing its binding to KDR. Modulates KDR signaling by forming heterodimers with KDR. Ligand binding leads to the activation of several signaling cascades. Activation of PLCG leads to the production of the cellular signaling molecules diacylglycerol and inositol 1,4,5-trisphosphate and the activation of protein kinase C. Mediates phosphorylation of PIK3R1, the regulatory subunit of phosphatidylinositol 3-kinase, leading to the activation of phosphatidylinositol kinase and the downstream signaling pathway. Mediates activation of MAPK1/ERK2, MAPK3/ERK1 and the MAP kinase signaling pathway, as well as of the AKT1 signaling pathway. Phosphorylates SRC, YES1 and PLCG, and may also phosphorylate CBL. Promotes phosphorylation of AKT1 and PTK2/FAK1. The protein is Vascular endothelial growth factor receptor 1 (Flt1) of Rattus norvegicus (Rat).